A 370-amino-acid polypeptide reads, in one-letter code: MVQASMRSPNMETFKQQKVEDFYDIGEELGSGQFAIVKKCREKSTGLEYAAKFIKKRQSRASRRGVCREEIEREVSILRQVLHPNIITLHDVYENRTDVVLILELVSGGELFDFLAQKESLSEEEATSFIKQILDGVNYLHTKKIAHFDLKPENIMLLDKNIPIPHIKLIDFGLAHEIEDGVEFKNIFGTPEFVAPEIVNYEPLGLEADMWSIGVITYILLSGASPFLGDTKQETLANITAVSYDFDEEFFSQTSELAKDFIRKLLVKETRKRLTIQEALRHPWITPVDTQQAMVRRESVVNLENFKKQYVRRRWKLSFSIVSLCNHLTRSLMKKVHLRTSEDLRNCESDTEENIARRKALHPRRRSSTS.

The region spanning 23-285 (YDIGEELGSG…IQEALRHPWI (263 aa)) is the Protein kinase domain. ATP contacts are provided by residues 29–37 (LGSGQFAIV) and Lys-52. The Proton acceptor role is filled by Asp-149. The tract at residues 287-354 (PVDTQQAMVR…RNCESDTEEN (68 aa)) is calmodulin-binding. Positions 292–301 (QAMVRRESVV) are autoinhibitory domain. Residue Ser-299 is modified to Phosphoserine. Ser-318 bears the Phosphoserine; by autocatalysis mark. Phosphoserine is present on Ser-349. Residue Thr-369 is modified to Phosphothreonine.

Belongs to the protein kinase superfamily. CAMK Ser/Thr protein kinase family. DAP kinase subfamily. As to quaternary structure, homodimer in its autoinhibited state. Active as monomer. Interacts with 14-3-3 proteins YWHAB, YWHAE, YWHAG, YWHAH, YWHAQ, YWHAZ and SFN; the interaction requires DAPK2 phosphorylation at Thr-369 and suppresses DAPK2 kinase activity and DAPK2-induced apoptosis. Requires Mg(2+) as cofactor. Post-translationally, autophosphorylation at Ser-318 inhibits its catalytic activity. Dephosphorylated at Ser-318 in response to activated Fas and TNF-alpha receptors. As to expression, expressed in peritubular interstitial cells of the renal cortex. Isoform 1 is found in the adult brain while isoform 2 is expressed in brains of embryos and young mice (at protein level).

It localises to the cytoplasm. It is found in the cytoplasmic vesicle. The protein resides in the autophagosome lumen. It catalyses the reaction L-seryl-[protein] + ATP = O-phospho-L-seryl-[protein] + ADP + H(+). The catalysed reaction is L-threonyl-[protein] + ATP = O-phospho-L-threonyl-[protein] + ADP + H(+). With respect to regulation, activated by Ca(2+)/calmodulin. Regulated by a double locking mechanism, involving autophosphorylation at Ser-318, calmodulin binding, and dimerization. In the inactive state, Ser-318 is phosphorylated, and the kinase is dimeric. Activation involves: dephosphorylation at Ser-318, release-of-autoinhibition mechanism where calmodulin binding induces a conformational change that relieves the steric block of the active site by the autoinhibitory domain, and generation of the monomeric active form of the kinase. Functionally, calcium/calmodulin-dependent serine/threonine kinase involved in multiple cellular signaling pathways that trigger cell survival, apoptosis, and autophagy. Capable of regulating both type I apoptotic and type II autophagic cell death signals. The former involves caspase activation, chromatin and mitochondrial condensation while the latter involves caspase-independent cell death in conjunction with accumulation of mature autophagic vesicles, plasma membrane blebs, and nuclear condensation without DNA degradation. Mediator of anoikis and a suppressor of beta-catenin-dependent anchorage-independent growth of malignant epithelial cells. May play a role in granulocytic maturation. Regulates granulocytes motility by controlling cell spreading and polarization. This chain is Death-associated protein kinase 2 (Dapk2), found in Mus musculus (Mouse).